The chain runs to 220 residues: tRNA (guanine-N(7)-)-methyltransferase (220 aa).

S-adenosyl-L-methionine is bound by residues E46, D71, D100, and D122. D122 is a catalytic residue. Substrate-binding positions include K126, D158, and 196 to 199; that span reads TEYE.

The protein belongs to the class I-like SAM-binding methyltransferase superfamily. TrmB family.

It catalyses the reaction guanosine(46) in tRNA + S-adenosyl-L-methionine = N(7)-methylguanosine(46) in tRNA + S-adenosyl-L-homocysteine. It functions in the pathway tRNA modification; N(7)-methylguanine-tRNA biosynthesis. Its function is as follows. Catalyzes the formation of N(7)-methylguanine at position 46 (m7G46) in tRNA. The sequence is that of tRNA (guanine-N(7)-)-methyltransferase from Malacoplasma penetrans (strain HF-2) (Mycoplasma penetrans).